We begin with the raw amino-acid sequence, 136 residues long: Regulator of nucleoside diphosphate kinase (136 aa).

This sequence belongs to the Rnk family. As to quaternary structure, interacts with the RNA polymerase.

Functionally, may act as an anti-Gre factor. The chain is Regulator of nucleoside diphosphate kinase from Escherichia coli O6:H1 (strain CFT073 / ATCC 700928 / UPEC).